A 257-amino-acid polypeptide reads, in one-letter code: Expansin-A10 (257 aa).

Residues 1-18 (MAPCLLLVLFLLPALATG) form the signal peptide. Positions 50–163 (GGACGFGDLG…RRVNCLRDGG (114 aa)) constitute an Expansin-like EG45 domain. One can recognise an Expansin-like CBD domain in the interval 173-252 (FFLTVLISNV…EWDFGKTYTG (80 aa)).

Belongs to the expansin family. Expansin A subfamily. As to expression, expressed in panicles and flowers.

The protein localises to the secreted. The protein resides in the cell wall. Its subcellular location is the membrane. May cause loosening and extension of plant cell walls by disrupting non-covalent bonding between cellulose microfibrils and matrix glucans. No enzymatic activity has been found. May be required for rapid internodal elongation in deepwater rice during submergence. The sequence is that of Expansin-A10 (EXPA10) from Oryza sativa subsp. japonica (Rice).